The sequence spans 257 residues: N-acetylglucosaminyldiphosphoundecaprenol N-acetyl-beta-D-mannosaminyltransferase (257 aa).

The protein belongs to the glycosyltransferase 26 family. TagA/TarA subfamily.

The catalysed reaction is UDP-N-acetyl-alpha-D-mannosamine + N-acetyl-alpha-D-glucosaminyl-di-trans,octa-cis-undecaprenyl diphosphate = N-acetyl-beta-D-mannosaminyl-(1-&gt;4)-N-acetyl-alpha-D-glucosaminyl di-trans,octa-cis-undecaprenyl diphosphate + UDP + H(+). It participates in cell wall biogenesis; poly(ribitol phosphate) teichoic acid biosynthesis. Its function is as follows. Catalyzes the conversion of GlcNAc-PP-undecaprenol into ManNAc-GlcNAc-PP-undecaprenol, the first committed lipid intermediate in the de novo synthesis of teichoic acid. In Bacillus spizizenii (strain ATCC 23059 / NRRL B-14472 / W23) (Bacillus subtilis subsp. spizizenii), this protein is N-acetylglucosaminyldiphosphoundecaprenol N-acetyl-beta-D-mannosaminyltransferase.